Consider the following 136-residue polypeptide: Small ribosomal subunit protein uS19 (136 aa).

This sequence belongs to the universal ribosomal protein uS19 family.

Its function is as follows. Protein S19 forms a complex with S13 that binds strongly to the 16S ribosomal RNA. This is Small ribosomal subunit protein uS19 from Methanosphaera stadtmanae (strain ATCC 43021 / DSM 3091 / JCM 11832 / MCB-3).